The primary structure comprises 107 residues: High mobility group protein HMG-I/HMG-Y (107 aa).

The disordered stretch occupies residues 1-107; sequence MSESSSKSSQ…ISQESSEEEQ (107 aa). N-acetylserine is present on Ser-2. Residue Lys-7 is modified to N6-acetyllysine. Residue Ser-8 is modified to ADP-ribosylserine. Ser-9 bears the ADP-ribosylserine; alternate mark. Phosphoserine; alternate is present on Ser-9. Lys-15 carries the N6-acetyllysine; alternate modification. Residue Lys-15 forms a Glycyl lysine isopeptide (Lys-Gly) (interchain with G-Cter in SUMO2); alternate linkage. The segment covering 15-24 has biased composition (basic and acidic residues); it reads KQEKDGTEKR. A DNA-binding region (a.T hook 1) is located at residues 21-31; sequence TEKRGRGRPRK. Asymmetric dimethylarginine; alternate is present on Arg-26. The residue at position 26 (Arg-26) is an Omega-N-methylarginine; alternate. Symmetric dimethylarginine; alternate is present on Arg-26. The residue at position 36 (Ser-36) is a Phosphoserine; by HIPK2 and CDC2. At Thr-39 the chain carries Phosphothreonine. Residues Ser-44 and Ser-49 each carry the phosphoserine modification. The residue at position 53 (Thr-53) is a Phosphothreonine; by HIPK2 and CDC2. 2 DNA-binding regions (a.T hook) span residues 53-63 and 78-89; these read TPKRPRGRPKG and APGRKPRGRPKK. An interaction with HIPK2 region spans residues 53 to 77; the sequence is TPKRPRGRPKGSKNKGAAKTRKATT. The span at 55–74 shows a compositional bias: basic residues; sequence KRPRGRPKGSKNKGAAKTRK. 2 positions are modified to asymmetric dimethylarginine; by PRMT6; alternate: Arg-58 and Arg-60. An omega-N-methylarginine; by PRMT6; alternate mark is found at Arg-58 and Arg-60. A compositionally biased stretch (acidic residues) spans 93-107; that stretch reads EEEEGISQESSEEEQ. Phosphoserine is present on residues Ser-99, Ser-102, and Ser-103.

It belongs to the HMGA family. Interacts with HIPK2. Isoforms HMG-I and HMG-Y can be phosphorylated by HIPK2. Phosphorylation may modulate DNA-binding affinity. In terms of processing, methylation at Arg-58 is mutually exclusive with methylation at Arg-60.

The protein localises to the nucleus. Its subcellular location is the chromosome. In terms of biological role, HMG-I/Y bind preferentially to the minor groove of A+T rich regions in double-stranded DNA. It is suggested that these proteins could function in nucleosome phasing and in the 3'-end processing of mRNA transcripts. They are also involved in the transcription regulation of genes containing, or in close proximity to A+T-rich regions. This chain is High mobility group protein HMG-I/HMG-Y (HMGA1), found in Cricetulus griseus (Chinese hamster).